We begin with the raw amino-acid sequence, 390 residues long: Dual-specificity RNA methyltransferase RlmN (390 aa).

Glu111 (proton acceptor) is an active-site residue. The 240-residue stretch at 117–356 (EDDRATLCVS…VIVRKTRGDD (240 aa)) folds into the Radical SAM core domain. Cys124 and Cys361 form a disulfide bridge. [4Fe-4S] cluster contacts are provided by Cys131, Cys135, and Cys138. S-adenosyl-L-methionine contacts are provided by residues 185–186 (GE), Ser217, 239–241 (SLH), and Asn318. The active-site S-methylcysteine intermediate is the Cys361.

Belongs to the radical SAM superfamily. RlmN family. [4Fe-4S] cluster is required as a cofactor.

It is found in the cytoplasm. The catalysed reaction is adenosine(2503) in 23S rRNA + 2 reduced [2Fe-2S]-[ferredoxin] + 2 S-adenosyl-L-methionine = 2-methyladenosine(2503) in 23S rRNA + 5'-deoxyadenosine + L-methionine + 2 oxidized [2Fe-2S]-[ferredoxin] + S-adenosyl-L-homocysteine. It catalyses the reaction adenosine(37) in tRNA + 2 reduced [2Fe-2S]-[ferredoxin] + 2 S-adenosyl-L-methionine = 2-methyladenosine(37) in tRNA + 5'-deoxyadenosine + L-methionine + 2 oxidized [2Fe-2S]-[ferredoxin] + S-adenosyl-L-homocysteine. Functionally, specifically methylates position 2 of adenine 2503 in 23S rRNA and position 2 of adenine 37 in tRNAs. m2A2503 modification seems to play a crucial role in the proofreading step occurring at the peptidyl transferase center and thus would serve to optimize ribosomal fidelity. The protein is Dual-specificity RNA methyltransferase RlmN of Edwardsiella ictaluri (strain 93-146).